The chain runs to 283 residues: Tumor necrosis factor receptor superfamily member 14 (283 aa).

Residues M1–A38 form the signal peptide. Residues L39–V202 are Extracellular-facing. Intrachain disulfides connect C42-C53, C54-C67, C57-C75, C78-C93, C96-C111, C99-C119, C121-C138, and C127-C135. TNFR-Cys repeat units follow at residues C42–C75, C78–C119, and C121–C162. N-linked (GlcNAc...) asparagine glycosylation is present at N110. The N-linked (GlcNAc...) asparagine glycan is linked to N173. A helical membrane pass occupies residues W203–I223. The Cytoplasmic portion of the chain corresponds to C224 to H283. S240 carries the phosphoserine modification.

It belongs to the tumor necrosis factor receptor superfamily. Interacts with TRAF2, TRAF3 and TRAF5. Interacts (via CRD1/TNFR-Cys 1) with CD160; this interaction is direct. Interacts with LTA and TNFSF14. Interacts (via CRD1/TNFR-Cys 1) in cis and trans with BTLA; the cis interactions inhibits the trans interactions. As to quaternary structure, (Microbial infection) Interacts with herpes simplex virus 1/HHV-1 envelope glycoprotein D. In terms of assembly, (Microbial infection) Interacts with herpes simplex virus 2/HHV-2 envelope glycoprotein D. Post-translationally, N-glycosylated. In terms of tissue distribution, widely expressed, with the highest expression in lung, spleen and thymus. Expressed in a subpopulation of B cells and monocytes. Expressed in naive T cells.

The protein resides in the cell membrane. In terms of biological role, receptor for four distinct ligands: The TNF superfamily members TNFSF14/LIGHT and homotrimeric LTA/lymphotoxin-alpha and the immunoglobulin superfamily members BTLA and CD160, altogether defining a complex stimulatory and inhibitory signaling network. Signals via the TRAF2-TRAF3 E3 ligase pathway to promote immune cell survival and differentiation. Participates in bidirectional cell-cell contact signaling between antigen presenting cells and lymphocytes. In response to ligation of TNFSF14/LIGHT, delivers costimulatory signals to T cells, promoting cell proliferation and effector functions. Interacts with CD160 on NK cells, enhancing IFNG production and anti-tumor immune response. In the context of bacterial infection, acts as a signaling receptor on epithelial cells for CD160 from intraepithelial lymphocytes, triggering the production of antimicrobial proteins and pro-inflammatory cytokines. Upon binding to CD160 on activated CD4+ T cells, down-regulates CD28 costimulatory signaling, restricting memory and alloantigen-specific immune response. May interact in cis (on the same cell) or in trans (on other cells) with BTLA. In cis interactions, appears to play an immune regulatory role inhibiting in trans interactions in naive T cells to maintain a resting state. In trans interactions, can predominate during adaptive immune response to provide survival signals to effector T cells. (Microbial infection) Acts as a receptor for Herpes simplex virus 1/HHV-1. Functionally, (Microbial infection) Acts as a receptor for Herpes simplex virus 2/HHV-2. This is Tumor necrosis factor receptor superfamily member 14 from Homo sapiens (Human).